The following is a 91-amino-acid chain: Small ribosomal subunit protein uS19 (91 aa).

Belongs to the universal ribosomal protein uS19 family.

Functionally, protein S19 forms a complex with S13 that binds strongly to the 16S ribosomal RNA. This Ralstonia pickettii (strain 12J) protein is Small ribosomal subunit protein uS19.